We begin with the raw amino-acid sequence, 122 residues long: SVGTSCIPGMAIPHNPLDSCRWYVSTRTCGVGPRLATQEMKARCCRQLEAIPAYCRCEAVRILMDGVVTPSGQHEGRLLQDLPGCPRQVQRAFAPKLVTEVECNLATIHGGPFCLSLLGAGE.

Intrachain disulfides connect Cys6-Cys55, Cys20-Cys44, Cys29-Cys85, Cys45-Cys103, and Cys57-Cys114.

The protein belongs to the protease inhibitor I6 (cereal trypsin/alpha-amylase inhibitor) family. As to expression, seeds.

It is found in the secreted. Its function is as follows. May play a protective role against endo- and exogenous hydrolytic activities in the Ragi seeds. This chain is Alpha-amylase/trypsin inhibitor, found in Eleusine coracana (Indian finger millet).